Consider the following 1267-residue polypeptide: Probable ATP-dependent RNA helicase DHR1 (1267 aa).

Disordered regions lie at residues Met-1 to Thr-67, Tyr-168 to Lys-233, and Glu-255 to Asp-313. Composition is skewed to basic and acidic residues over residues Arg-7 to Arg-25 and Thr-32 to Asn-43. Acidic residues predominate over residues Glu-175–Glu-192. Position 181 is a phosphoserine (Ser-181). Over residues Thr-202–Pro-217 the composition is skewed to basic and acidic residues. Residues Asp-264–Glu-284 show a composition bias toward acidic residues. The Helicase ATP-binding domain maps to Met-401–Val-580. Gly-414–Thr-421 lines the ATP pocket. A DEAH box motif is present at residues Asp-516 to His-519. One can recognise a Helicase C-terminal domain in the interval Asp-675–Ala-858. Disordered regions lie at residues Arg-693–Thr-720 and Pro-955–Asp-976. The span at Glu-695–Leu-719 shows a compositional bias: acidic residues.

It belongs to the DEAD box helicase family. DEAH subfamily. Interacts with snoRNA U3. Component of the ribosomal small subunit (SSU) processome composed of at least 40 protein subunits and snoRNA U3.

The protein resides in the nucleus. The protein localises to the nucleolus. It catalyses the reaction ATP + H2O = ADP + phosphate + H(+). Functionally, probable ATP-binding RNA helicase. Required for 18S rRNA synthesis. May play a role in restructuring of the pre-rRNA. In Saccharomyces cerevisiae (strain ATCC 204508 / S288c) (Baker's yeast), this protein is Probable ATP-dependent RNA helicase DHR1 (ECM16).